We begin with the raw amino-acid sequence, 438 residues long: Alkylcitrate synthase tstJ (438 aa).

Catalysis depends on residues H309 and D365.

It belongs to the citrate synthase family.

The catalysed reaction is (2E,10E)-dode-2,10-dicenoyl-CoA + oxaloacetate + H2O = (4E,11E)-2-hydroxytrideca-4,11-dien-1,2,3-tricarboxylate + CoA + H(+). Its pathway is secondary metabolite biosynthesis. In terms of biological role, alkylcitrate synthase; part of the gene cluster that mediates the biosynthesis of the antihypercholesterolemic agents phomoidrides which are dimeric anhydrides. Within the pathway, the alkylcitrate synthase (ACS) tstJ and the alkylcitrate dehydratase (ACDH) tstI produce the decarboxylated monomeric anhydrides by coupling the C12-fatty acyl product from phiA with oxalacetic acid. The pathway begins with the highly reducing polyketide synthase tstA that catalyzes the formation of a C12-fatty acyl-ACP, starting from one acetate and 5 malonate units. The hydrolase tstM is involved in the release of the C12-fatty acyl chain from phiA. The alkylcitrate synthase (ACS) tstJ and the alkylcitrate dehydratase (ACDH) tstI then give rise to decarboxylated monomeric anhydrides by coupling the C12-fatty acyl chain with oxalacetic acid. The cyclase tstC is responsible for the dimerization of the monomeric anhydrides which leads to the production of prephomoidride that contains the characteristic bicyclo[4.3.1]deca-1,6-diene system of phomoidrides. Iterative oxidation catalyzed by the alpha-ketoglutarate-dependent dioxygenase tstK produced then phomoidride A. Finally, the methyltransferase tstE converts phomoidride A to phomoidride B via an acetalization reaction. The phosphatidylethanolamine-binding protein tstB and tstN are not essential for dimerization and their functions have still to be determined. The protein is Alkylcitrate synthase tstJ of Talaromyces stipitatus (strain ATCC 10500 / CBS 375.48 / QM 6759 / NRRL 1006) (Penicillium stipitatum).